The sequence spans 283 residues: uncharacterized protein (283 aa).

Residue Asp-121 is part of the active site.

The protein belongs to the pseudouridine synthase RluA family.

The enzyme catalyses a uridine in RNA = a pseudouridine in RNA. This is an uncharacterized protein from Bacillus subtilis (strain 168).